The sequence spans 858 residues: Adenylate cyclase, germination specific (858 aa).

At 1-18 (MKKTFVKILSKSYVEGYP) the chain is on the cytoplasmic side. The chain crosses the membrane as a helical; Signal-anchor for type II membrane protein span at residues 19–41 (VGFFIGLIILAIFGSMVCIFSFM). Topologically, residues 42–858 (HYSEEENSNI…DENVESKKNK (817 aa)) are extracellular. The CHASE domain occupies 86-317 (VNPNFDRNDF…DCVLKLWIFT (232 aa)). The 131-residue stretch at 396–526 (CVFFLDIAGF…DTVNVASRME (131 aa)) folds into the Guanylate cyclase domain. Residues aspartate 401, isoleucine 402, and aspartate 445 each coordinate Mg(2+). Disordered stretches follow at residues 650-691 (YYYH…YHDT), 767-803 (SDNV…STNE), and 827-858 (ENCD…KKNK). Composition is skewed to low complexity over residues 767-778 (SDNVNNYENNNN), 788-797 (GDNNNINDNN), and 834-849 (DNNN…NNND).

It belongs to the adenylyl cyclase class-4/guanylyl cyclase family.

It is found in the membrane. It catalyses the reaction ATP = 3',5'-cyclic AMP + diphosphate. Its activity is regulated as follows. Insensitive to guanine nucleotides. In terms of biological role, has a large extracellular domain which may be involved in the recognition of an extracellular signal present during germination, leading to activation or inhibition of cAMP synthesis by the cytoplasmic domain. The chain is Adenylate cyclase, germination specific (acgA) from Dictyostelium discoideum (Social amoeba).